Here is a 171-residue protein sequence, read N- to C-terminus: Phosphopantetheine adenylyltransferase (171 aa).

Threonine 9 serves as a coordination point for substrate. ATP-binding positions include 9-10 (TF) and histidine 17. Substrate is bound by residues lysine 41, leucine 73, and arginine 87. ATP is bound by residues 88 to 90 (GLR), glutamate 98, and 123 to 129 (YQFISGT).

This sequence belongs to the bacterial CoaD family. Homohexamer. It depends on Mg(2+) as a cofactor.

The protein resides in the cytoplasm. It carries out the reaction (R)-4'-phosphopantetheine + ATP + H(+) = 3'-dephospho-CoA + diphosphate. The protein operates within cofactor biosynthesis; coenzyme A biosynthesis; CoA from (R)-pantothenate: step 4/5. In terms of biological role, reversibly transfers an adenylyl group from ATP to 4'-phosphopantetheine, yielding dephospho-CoA (dPCoA) and pyrophosphate. The protein is Phosphopantetheine adenylyltransferase of Paraburkholderia xenovorans (strain LB400).